A 36-amino-acid polypeptide reads, in one-letter code: Pancreatic polypeptide (36 aa).

Phenylalanine 36 is modified (phenylalanine amide).

Belongs to the NPY family.

The protein localises to the secreted. Its function is as follows. Hormone secreted by pancreatic cells that acts as a regulator of pancreatic and gastrointestinal functions. The sequence is that of Pancreatic polypeptide (ppy) from Alligator mississippiensis (American alligator).